The chain runs to 372 residues: Cytochrome b (372 aa).

Helical transmembrane passes span 29 to 49 (FGSM…ILSW), 73 to 95 (WFIR…LHIL), 108 to 128 (VWYS…LGYV), and 174 to 194 (FFSF…IHLI). Heme b contacts are provided by His79 and His93. His178 and His192 together coordinate heme b. An a ubiquinone-binding site is contributed by His197. The next 4 membrane-spanning stretches (helical) occupy residues 220-240 (FSLK…FCIF), 284-301 (LGGV…VFLG), 311-336 (MVKT…IMGG), and 344-363 (DILG…IMLL).

It belongs to the cytochrome b family. The main subunits of complex b-c1 are: cytochrome b, cytochrome c1 and the Rieske protein. The cofactor is heme b.

It is found in the mitochondrion inner membrane. Functionally, component of the ubiquinol-cytochrome c reductase complex (complex III or cytochrome b-c1 complex) that is part of the mitochondrial respiratory chain. The b-c1 complex mediates electron transfer from ubiquinol to cytochrome c. Contributes to the generation of a proton gradient across the mitochondrial membrane that is then used for ATP synthesis. This is Cytochrome b (mt:Cyt-b) from Leptorhynchoides thecatus (Thorny-headed worm).